Here is a 492-residue protein sequence, read N- to C-terminus: JmjC domain-containing histone demethylation protein 1 (492 aa).

Residues 4–72 form a PHD-type; atypical zinc finger; it reads PNICQHCQLK…SYRCPNHKEG (69 aa). Positions 254-409 constitute a JmjC domain; the sequence is TAVRQNDLVD…THLKIVEIEK (156 aa). Thr302 provides a ligand contact to substrate. 2 residues coordinate Fe cation: His305 and Asp307. Lys322 lines the substrate pocket. His377 contacts Fe cation.

It belongs to the JHDM1 histone demethylase family. Fe(2+) is required as a cofactor.

Its subcellular location is the nucleus. The enzyme catalyses N(6),N(6)-dimethyl-L-lysyl(36)-[histone H3] + 2 2-oxoglutarate + 2 O2 = L-lysyl(36)-[histone H3] + 2 formaldehyde + 2 succinate + 2 CO2. Its function is as follows. Histone demethylase that specifically demethylates 'Lys-36' of histone H3, thereby playing a central role in histone code. Does not demethylate H3 'Lys-4' nor 'Lys-79'. The polypeptide is JmjC domain-containing histone demethylation protein 1 (JHD1) (Saccharomyces cerevisiae (strain ATCC 204508 / S288c) (Baker's yeast)).